A 346-amino-acid polypeptide reads, in one-letter code: MRLLFLAVLRPHTGNAVTAQRVRAHLEAAGHVCILKDAFDFESPSEIANLILAENCEAALALHLYRGGRLLQGHRIPFGVIFGGTDVNEDANQAEKNTVMGRVLEEARFAVAFTESMKEMAQVQWPHAKGKIYVQSQGIATTPNAAFNWNTFLQRSEINQSADNLHIFLLICGLRQVKDPLYLVDAFSEWHQEEPNVYLVILGPEVDPVFTREVKANVKRAAGVRLIGEMPQEDLHAVVKNCFAVVNSSVSEGMSAAILEAMDLEVPVLARNIPGNAAMVKHEVTGLLFSNPQEFVHLAKRLVSDPALEKEIVVNGKEYVRMYHSWQVERDTYQQLIRKLEGSTED.

Residues 1–16 (MRLLFLAVLRPHTGNA) form the signal peptide.

It belongs to the glycosyltransferase group 1 family. Glycosyltransferase 4 subfamily.

It localises to the secreted. This Pongo abelii (Sumatran orangutan) protein is Glycosyltransferase 1 domain-containing protein 1 (GLT1D1).